Consider the following 1066-residue polypeptide: FHIP family protein GH13096 (1066 aa).

Residues 1–15 (MSWLRTSPLRQSLTR) are compositionally biased toward polar residues. The segment at 1 to 33 (MSWLRTSPLRQSLTRNSGGNGSGGSGNSGNASA) is disordered. A compositionally biased stretch (gly residues) spans 18–27 (GGNGSGGSGN). Phosphoserine is present on Ser512. Disordered stretches follow at residues 647–688 (SFKW…NSSG), 827–885 (DNSP…RSDN), and 942–1010 (SRGV…FNSE). A compositionally biased stretch (low complexity) spans 658-687 (NDATTTTATSDPDVEHNNSSNHNNSSINSS). Ser829 carries the phosphoserine modification. Low complexity predominate over residues 836-856 (HQQQQLQHTTNSTHQQQQAQQ). A compositionally biased stretch (polar residues) spans 950-963 (PRGNTCETSLSTTP). The span at 967–996 (AQATSASSTNSSIGGSTQTLSATHSSSTLH) shows a compositional bias: low complexity. The span at 1001–1010 (GPQTASFNSE) shows a compositional bias: polar residues.

Belongs to the FHIP family.

This Drosophila grimshawi (Hawaiian fruit fly) protein is FHIP family protein GH13096.